Reading from the N-terminus, the 142-residue chain is Nucleoside diphosphate kinase (142 aa).

Positions 11, 59, 87, 93, 104, and 114 each coordinate ATP. His117 functions as the Pros-phosphohistidine intermediate in the catalytic mechanism.

This sequence belongs to the NDK family. In terms of assembly, homotetramer. Requires Mg(2+) as cofactor.

The protein localises to the cytoplasm. It catalyses the reaction a 2'-deoxyribonucleoside 5'-diphosphate + ATP = a 2'-deoxyribonucleoside 5'-triphosphate + ADP. It carries out the reaction a ribonucleoside 5'-diphosphate + ATP = a ribonucleoside 5'-triphosphate + ADP. In terms of biological role, major role in the synthesis of nucleoside triphosphates other than ATP. The ATP gamma phosphate is transferred to the NDP beta phosphate via a ping-pong mechanism, using a phosphorylated active-site intermediate. This is Nucleoside diphosphate kinase from Marinobacter nauticus (strain ATCC 700491 / DSM 11845 / VT8) (Marinobacter aquaeolei).